The primary structure comprises 522 residues: Acetylcholine receptor subunit delta (522 aa).

A signal peptide spans 1-21 (MGNIHFVYLLISCLYYSGCSG). Residues 22–245 (VNEEERLIND…VTFYLIIRRK (224 aa)) are Extracellular-facing. Asn91, Asn164, and Asn229 each carry an N-linked (GlcNAc...) asparagine glycan. A disulfide bridge links Cys151 with Cys165. Transmembrane regions (helical) follow at residues 246–270 (PLFY…AFYL), 278–295 (MSTA…LLLT), and 312–333 (YLMF…VLNF). Residues 334-476 (HFRTPSTHVL…WNLVGQTIDR (143 aa)) are Cytoplasmic-facing. The residue at position 393 (Tyr393) is a Phosphotyrosine; by Tyr-kinases. A helical membrane pass occupies residues 477 to 497 (LSMFIITPVMVLGTIFIFVMG).

Belongs to the ligand-gated ion channel (TC 1.A.9) family. Acetylcholine receptor (TC 1.A.9.1) subfamily. Pentamer of two alpha chains, and one each of the beta, delta, and gamma chains.

The protein localises to the postsynaptic cell membrane. Its subcellular location is the cell membrane. It catalyses the reaction K(+)(in) = K(+)(out). The enzyme catalyses Na(+)(in) = Na(+)(out). Functionally, after binding acetylcholine, the AChR responds by an extensive change in conformation that affects all subunits and leads to opening of an ion-conducting channel across the plasma membrane. The protein is Acetylcholine receptor subunit delta (chrnd) of Tetronarce californica (Pacific electric ray).